The chain runs to 330 residues: Copper-containing nitrite reductase (330 aa).

Plastocyanin-like domains follow at residues Gly1–Val165 and Tyr166–Ala330. Cu cation contacts are provided by His85, His90, His125, Cys126, His135, Met140, and His296.

The protein belongs to the multicopper oxidase family. Homotrimer. Requires Cu(2+) as cofactor. The cofactor is Cu(+). FAD serves as cofactor.

The protein localises to the periplasm. It catalyses the reaction nitric oxide + Fe(III)-[cytochrome c] + H2O = Fe(II)-[cytochrome c] + nitrite + 2 H(+). It functions in the pathway nitrogen metabolism; nitrate reduction (denitrification); dinitrogen from nitrate: step 2/4. This chain is Copper-containing nitrite reductase (nirK), found in Alcaligenes xylosoxydans xylosoxydans (Achromobacter xylosoxidans).